A 224-amino-acid chain; its full sequence is 2,5-diamino-6-ribosylamino-4(3H)-pyrimidinone 5'-phosphate reductase (224 aa).

NADP(+)-binding positions include threonine 57, aspartate 61, 82–85, valine 131, and 153–156; these read STAN and GASI.

The protein belongs to the HTP reductase family. Homodimer.

The enzyme catalyses 2,5-diamino-6-(1-D-ribitylamino)pyrimidin-4(3H)-one 5'-phosphate + NADP(+) = 2,5-diamino-6-(1-D-ribosylamino)pyrimidin-4(3H)-one 5'-phosphate + NADPH + H(+). It catalyses the reaction 2,5-diamino-6-(1-D-ribitylamino)pyrimidin-4(3H)-one 5'-phosphate + NAD(+) = 2,5-diamino-6-(1-D-ribosylamino)pyrimidin-4(3H)-one 5'-phosphate + NADH + H(+). Its pathway is cofactor biosynthesis; riboflavin biosynthesis. Catalyzes an early step in riboflavin biosynthesis, the NADPH-dependent reduction of the ribose side chain of 2,5-diamino-6-ribosylamino-4(3H)-pyrimidinone 5'-phosphate, yielding 2,5-diamino-6-ribitylamino-4(3H)-pyrimidinone 5'-phosphate. This is 2,5-diamino-6-ribosylamino-4(3H)-pyrimidinone 5'-phosphate reductase (ribD2) from Aquifex aeolicus (strain VF5).